Consider the following 323-residue polypeptide: Arginase (323 aa).

The Mn(2+) site is built by H119, D142, H144, and D146. Substrate is bound by residues 144–148 (HADIN), 155–157 (SKN), and D198. Residues D247 and D249 each coordinate Mn(2+). T261 and E292 together coordinate substrate.

The protein belongs to the arginase family. As to quaternary structure, homotrimer. It depends on Mn(2+) as a cofactor.

The catalysed reaction is L-arginine + H2O = urea + L-ornithine. It functions in the pathway nitrogen metabolism; urea cycle; L-ornithine and urea from L-arginine: step 1/1. In Schizosaccharomyces pombe (strain 972 / ATCC 24843) (Fission yeast), this protein is Arginase (aru1).